Consider the following 165-residue polypeptide: MPPKFDPNEVKFLYLRAVGGEVGASSALAPKIGPLGLSPKKVGEDIAKATKEYKGIKVTVQLRIQNRQATASVVPSASSLVITALKEPVRDRKKEKNVKHSGNIPLDEIFEIARKMQHKSFGKNLASVSKEILGTAQSVGCRVDGKNPHDIIDAINAGEIDVPEN.

Belongs to the universal ribosomal protein uL11 family. Component of the large ribosomal subunit. Mature ribosomes consist of a small (40S) and a large (60S) subunit. The 40S subunit contains about 32 different proteins and 1 molecule of RNA (18S). The 60S subunit contains 45 different proteins and 3 molecules of RNA (25S, 5.8S and 5S).

The protein resides in the cytoplasm. Functionally, component of the ribosome, a large ribonucleoprotein complex responsible for the synthesis of proteins in the cell. The small ribosomal subunit (SSU) binds messenger RNAs (mRNAs) and translates the encoded message by selecting cognate aminoacyl-transfer RNA (tRNA) molecules. The large subunit (LSU) contains the ribosomal catalytic site termed the peptidyl transferase center (PTC), which catalyzes the formation of peptide bonds, thereby polymerizing the amino acids delivered by tRNAs into a polypeptide chain. The nascent polypeptides leave the ribosome through a tunnel in the LSU and interact with protein factors that function in enzymatic processing, targeting, and the membrane insertion of nascent chains at the exit of the ribosomal tunnel. This chain is Large ribosomal subunit protein uL11 (RPL12), found in Candida albicans (strain SC5314 / ATCC MYA-2876) (Yeast).